The chain runs to 1019 residues: Type VI secretion system spike protein VgrG2b (1019 aa).

Residues 268 to 291 are disordered; the sequence is AGRPFTESRLRGHRRDARVASVSG. Residue His935 participates in Zn(2+) binding. Glu936 is an active-site residue. 2 residues coordinate Zn(2+): His939 and Glu983.

The protein belongs to the VgrG protein family. As to quaternary structure, interacts with Tla3; this interaction promotes Tle3 loading onto VgrG2b. Interacts with host gamma-tubulin ring complex components GCP1 and GCP4. Requires Zn(2+) as cofactor.

It localises to the secreted. Functionally, part of the H2 type VI secretion system (H2-T6SS) specialized secretion system, which delivers several virulence factors in both prokaryotic and eukaryotic cells during infection. Forms the spike at the tip of the elongating tube probably formed by haemolysin co-regulated protein 2b/Hcp2b. Allows the delivery of the Tle3 antibacterial toxin to target cells where it exerts its toxicity. Additionally, acts directly as an effector and promotes internalization by interacting with the host gamma-tubulin ring complex. Elicits toxicity also in the bacterial periplasm and disrupts bacterial cell morphology. Toxicity is counteracted by a cognate immunity protein. This Pseudomonas aeruginosa (strain ATCC 15692 / DSM 22644 / CIP 104116 / JCM 14847 / LMG 12228 / 1C / PRS 101 / PAO1) protein is Type VI secretion system spike protein VgrG2b (vgrG2b).